The chain runs to 468 residues: MTQKVRTRFAPSPTGFIHLGNIRSALYPWAFARATGGDFILRIEDTDVERSTQASVDVIIEGMAWLQLDHDEGPFYQMQRMDRYKEVLAGLQASGHVYPCYMSVEELDALRERQMANKEKPRYDGTWRPEEGKVLPPVPEGVRPVLRFKTPQGGVVAWEDKCKGRIEFQNSELDDLVIARPDGTPTYNFCVCVDDMDMAITHVIRGDDHVNNTPRQIHIFEALGASVPVFAHLPTVLNEQGEKMSKRNGAKAVTQYRDEGYLPDAMVNYLARLGWSHGDDEIFSRAQFLEWFNLDHLGRSAGQFDEAKLRWVNAQHLKALDDAALAELVRPFVLKTGLDQALLDADDRLPRICALFKDRCETLVDLAGWVRLFYVDAFDRNAEDLAKHVTDVVAPALDAFAEGIASVEWSKEAIAALIKEVLKAQGLKMPQLAMPVRVLTLGTAHTPSVDAVLELLGREKILARLKNR.

The 'HIGH' region motif lies at 11 to 21 (PSPTGFIHLGN). The short motif at 243–247 (KMSKR) is the 'KMSKS' region element. ATP is bound at residue Lys-246.

This sequence belongs to the class-I aminoacyl-tRNA synthetase family. Glutamate--tRNA ligase type 1 subfamily. In terms of assembly, monomer.

It localises to the cytoplasm. It carries out the reaction tRNA(Glu) + L-glutamate + ATP = L-glutamyl-tRNA(Glu) + AMP + diphosphate. Its function is as follows. Catalyzes the attachment of glutamate to tRNA(Glu) in a two-step reaction: glutamate is first activated by ATP to form Glu-AMP and then transferred to the acceptor end of tRNA(Glu). In Delftia acidovorans (strain DSM 14801 / SPH-1), this protein is Glutamate--tRNA ligase.